A 502-amino-acid chain; its full sequence is Maturase K (502 aa).

Belongs to the intron maturase 2 family. MatK subfamily.

It is found in the plastid. The protein localises to the chloroplast. In terms of biological role, usually encoded in the trnK tRNA gene intron. Probably assists in splicing its own and other chloroplast group II introns. In Ehretia anacua (Sandpaper tree), this protein is Maturase K.